Consider the following 172-residue polypeptide: PRELI domain containing protein 3A (172 aa).

The PRELI/MSF1 domain occupies 1–172 (MKIWSSEHVF…IIEHSESAVS (172 aa)).

Belongs to the slowmo family. Interacts with TRIAP1.

Its subcellular location is the mitochondrion. In vitro, the TRIAP1:PRELID3A complex mediates the transfer of phosphatidic acid (PA) between liposomes and probably functions as a PA transporter across the mitochondrion intermembrane space. Phosphatidic acid import is required for cardiolipin (CL) synthesis in the mitochondrial inner membrane. The polypeptide is PRELI domain containing protein 3A (PRELID3A) (Homo sapiens (Human)).